A 43-amino-acid polypeptide reads, in one-letter code: Protein PsbN (43 aa).

A helical membrane pass occupies residues 5–27 (TFITIFISCLLVSVTGYALYTAF).

It belongs to the PsbN family.

It localises to the plastid. The protein localises to the chloroplast thylakoid membrane. In terms of biological role, may play a role in photosystem I and II biogenesis. The polypeptide is Protein PsbN (Chara vulgaris (Common stonewort)).